The primary structure comprises 399 residues: Guanine nucleotide-binding protein G(f) subunit alpha (399 aa).

The G-alpha domain maps to 46-399 (TTVKILLLGT…SENVSSMGLF (354 aa)). The interval 49 to 62 (KILLLGTAESGKTT) is G1 motif. GTP-binding positions include 54 to 61 (GTAESGKT), 188 to 194 (LHSRKIT), 221 to 225 (DVGGQ), 290 to 293 (NKYD), and Ala371. The segment at 186–194 (DILHSRKIT) is G2 motif. Residue Thr194 coordinates Mg(2+). The interval 217–226 (FQMYDVGGQR) is G3 motif. Residues 286 to 293 (IVFLNKYD) are G4 motif. The segment at 369–374 (TVATDT) is G5 motif.

This sequence belongs to the G-alpha family. G proteins are composed of 3 units; alpha, beta and gamma. The alpha chain contains the guanine nucleotide binding site. In terms of tissue distribution, during embryogenesis, expressed primarily in the developing gut and transiently in the amnioserosa.

Guanine nucleotide-binding proteins (G proteins) are involved as modulators or transducers in various transmembrane signaling systems. This is Guanine nucleotide-binding protein G(f) subunit alpha (Galphaf) from Drosophila melanogaster (Fruit fly).